The sequence spans 718 residues: MRNLQPDSVENSLSQLPSRCLETRKRKRSYKKRPVTYSYWRRTQRNRARKHKAPVKGLVSFEDVSVDFTWDEWQDLDDSQRKLYRDVMLETYSSLESLGHCITKPEVIFKLEQGAEPWRAEDVPKQSRADVQKITELNETSQDNEERHLWHHAITYSNKSTEEKVKLGNIVNVSSNCVSNLTVKNGNSSGMRPVALTVWQSVLPPNKPDDTRIGEELDASLTSEPPIHAEHPGLYSRAPGTGQQFQCCMQEVTCNTKALWTKRFHIAHGSSKFGESEKVPDEVALHAQDVSWVRAETFECSICKKTFCTKCELMKHKKIHKGQQYYTCRDCEKTFIKESYHTDQRVHAGVGSHRCKQCEKCFHQKNQQNVHERVPREARLWEVYQSENSFGEKPNLRRYQRTRAGYKPYGCNLCGKAFYRKSHLGRHQKIHTGEKPYGCEECKKTFYHKSSLTIHQRTHTGEKPYECKKCRKTFYCKSDLNVHHRTHTGEKPYECDECRKTFYSKSHLVIHQKVHTGDKPYECEECQKAFSRKSNLTVHQKTHTGEKPYECNVCGKTFHRQSHLNMHQGTHTGQKPYQCEECGKAFYQKSSLRRHQRNHTGSRPYACEECRKTFLHKSSLTVHQRSHTGYKPYSCEECRKTFYSKSHLTVHQRTHTGEKPYECKLCKKAFHQKSYLNRHQVTHGSEKRFECQECRKTFYHKSSLTVHQRIHLRELLCV.

The KRAB domain occupies 59–130 (VSFEDVSVDF…EDVPKQSRAD (72 aa)). Residues 298 to 320 (FECSICKKTFCTKCELMKHKKIH) form a C2H2-type 1 zinc finger. A C2H2-type 2; degenerate zinc finger spans residues 353–375 (HRCKQCEKCFHQKNQQNVHERVP). 11 C2H2-type zinc fingers span residues 409-431 (YGCNLCGKAFYRKSHLGRHQKIH), 437-459 (YGCEECKKTFYHKSSLTIHQRTH), 465-487 (YECKKCRKTFYCKSDLNVHHRTH), 493-515 (YECDECRKTFYSKSHLVIHQKVH), 521-543 (YECEECQKAFSRKSNLTVHQKTH), 549-571 (YECNVCGKTFHRQSHLNMHQGTH), 577-599 (YQCEECGKAFYQKSSLRRHQRNH), 605-627 (YACEECRKTFLHKSSLTVHQRSH), 633-655 (YSCEECRKTFYSKSHLTVHQRTH), 661-683 (YECKLCKKAFHQKSYLNRHQVTH), and 689-711 (FECQECRKTFYHKSSLTVHQRIH).

Predominantly in the spermatocytes and spermatids of testes.

The protein resides in the nucleus. Functionally, a putative DNA-binding regulatory protein associated with meiosis in spermatogenesis. The polypeptide is Zinc finger protein 39 (Zfp39) (Mus musculus (Mouse)).